Reading from the N-terminus, the 312-residue chain is Sulfate adenylyltransferase subunit 2 (312 aa).

It belongs to the PAPS reductase family. CysD subfamily. As to quaternary structure, heterodimer composed of CysD, the smaller subunit, and CysN.

The catalysed reaction is sulfate + ATP + H(+) = adenosine 5'-phosphosulfate + diphosphate. It functions in the pathway sulfur metabolism; hydrogen sulfide biosynthesis; sulfite from sulfate: step 1/3. With CysN forms the ATP sulfurylase (ATPS) that catalyzes the adenylation of sulfate producing adenosine 5'-phosphosulfate (APS) and diphosphate, the first enzymatic step in sulfur assimilation pathway. APS synthesis involves the formation of a high-energy phosphoric-sulfuric acid anhydride bond driven by GTP hydrolysis by CysN coupled to ATP hydrolysis by CysD. This is Sulfate adenylyltransferase subunit 2 from Methylobacterium nodulans (strain LMG 21967 / CNCM I-2342 / ORS 2060).